Here is a 348-residue protein sequence, read N- to C-terminus: Rhodopsin (348 aa).

The residue at position 1 (Met-1) is an N-acetylmethionine. The Extracellular segment spans residues 1-36; that stretch reads MNGTEGPNFYVPFSNKTGVVRSPFEFPQYYLAEPWQ. Residues Asn-2 and Asn-15 are each glycosylated (N-linked (GlcNAc...) asparagine). The helical transmembrane segment at 37–61 threads the bilayer; the sequence is FSMLAAYMFLLIVLGFPINFLTLYV. Over 62-73 the chain is Cytoplasmic; sequence TVQHKKLRTPLN. Residues 74 to 96 form a helical membrane-spanning segment; it reads YILLNLAVADLFMVFGGFTTTLY. At 97–110 the chain is on the extracellular side; that stretch reads TSLHGYFVFGPTGC. Cys-110 and Cys-187 are disulfide-bonded. Residues 111–133 form a helical membrane-spanning segment; that stretch reads NLEGFFATLGGEIALWSLVVLAI. Positions 134–136 match the 'Ionic lock' involved in activated form stabilization motif; sequence ERY. Residues 134–152 are Cytoplasmic-facing; sequence ERYVVVCKPMSNFRFGENH. A helical transmembrane segment spans residues 153 to 173; that stretch reads AIMGVGFTWVMALACAAPPLV. Over 174–202 the chain is Extracellular; that stretch reads GWSRYIPEGMQCSCGIDYYTLKPEVNNES. Zn(2+) is bound at residue Glu-201. A helical membrane pass occupies residues 203 to 224; sequence FVIYMFVVHFTIPMIVIFFCYG. Over 225-252 the chain is Cytoplasmic; it reads QLVFTVKEAAAQQQESATTQKAEKEVTR. Residues 253 to 274 form a helical membrane-spanning segment; that stretch reads MVIIMVIAFLICWVPYASVAFY. The Extracellular segment spans residues 275-286; it reads IFTHQGSNFGPI. Gln-279 contributes to the Zn(2+) binding site. The chain crosses the membrane as a helical span at residues 287–308; it reads FMTLPAFFAKAASIYNPVIYIM. Lys-296 carries the N6-(retinylidene)lysine modification. Residues 309–348 are Cytoplasmic-facing; that stretch reads MNKQFRTCMITTLCCGKNPLGDDEVSASASKTETSQVAPA. S-palmitoyl cysteine attachment occurs at residues Cys-322 and Cys-323. The interaction with SAG stretch occupies residues 330-348; it reads DDEVSASASKTETSQVAPA. Phosphoserine is present on residues Ser-334 and Ser-338. Phosphothreonine occurs at positions 340 and 342. At Ser-343 the chain carries Phosphoserine.

This sequence belongs to the G-protein coupled receptor 1 family. Opsin subfamily. As to quaternary structure, homodimer. May form a complex composed of RHO, GRK1 and RCVRN in a Ca(2+)-dependent manner; RCVRN prevents the interaction between GRK1 and RHO. Interacts with GRK1. Interacts (phosphorylated form) with SAG. Interacts with GNAT1. Interacts with GNAT3. SAG and G-proteins compete for a common binding site. Interacts with PRCD; the interaction promotes PRCD stability. Forms a complex with ASAP1 and ARF4. Forms a complex with ASAP1, RAB11A, Rabin8/RAB3IP, ARF4 and RAB11FIP3; the complex regulates Golgi-to-cilia rhodopsin/RHO transport in photoreceptors. Phosphorylated on some or all of the serine and threonine residues present in the C-terminal region. In terms of processing, contains one covalently linked retinal chromophore. Upon light absorption, the covalently bound 11-cis-retinal is converted to all-trans-retinal. After hydrolysis of the Schiff base and release of the covalently bound all-trans-retinal, active rhodopsin is regenerated by binding of a fresh molecule of 11-cis-retinal.

It localises to the membrane. The protein resides in the cell projection. It is found in the cilium. The protein localises to the photoreceptor outer segment. Functionally, photoreceptor required for image-forming vision at low light intensity. Required for photoreceptor cell viability after birth. Light-induced isomerization of 11-cis to all-trans retinal triggers a conformational change that activates signaling via G-proteins. Subsequent receptor phosphorylation mediates displacement of the bound G-protein alpha subunit by the arrestin SAG and terminates signaling. This is Rhodopsin (RHO) from Phoca vitulina (Harbor seal).